The chain runs to 318 residues: Death effector domain-containing protein (318 aa).

The region spanning 25-103 (SLHRMFDIVG…RHDLLPYVTL (79 aa)) is the DED domain. Disordered stretches follow at residues 128–147 (PRAL…TVPP) and 160–191 (QMCS…KEKQ).

As to quaternary structure, interacts with CASP8, CASP10, KRT8, KRT18, CASP3 and FADD. Homodimerizes and heterodimerizes with DEDD2. Post-translationally, exists predominantly in a mono- or diubiquitinated form. In terms of tissue distribution, widely expressed with highest levels in testis.

The protein resides in the cytoplasm. It localises to the nucleus. Its subcellular location is the nucleolus. In terms of biological role, a scaffold protein that directs CASP3 to certain substrates and facilitates their ordered degradation during apoptosis. May also play a role in mediating CASP3 cleavage of KRT18. Regulates degradation of intermediate filaments during apoptosis. May play a role in the general transcription machinery in the nucleus and might be an important regulator of the activity of GTF3C3. Inhibits DNA transcription in vitro. The sequence is that of Death effector domain-containing protein (DEDD) from Homo sapiens (Human).